Here is a 271-residue protein sequence, read N- to C-terminus: MPDLHTLPAGSRPERAIRNNGPSDLALERYKLRELAEGWPCYRDACEWENLRSIFHPDAHIYTTWTGLTHHLQFIEASKTGMDNGVFIMHRIHGSTTDIDPSGVRAVTKMKATITQRFSGLPCVSGGTCEADAESDCRFIFFWEKLDGSEYPELDQQWRARFVRHWYEKDKLIAVTAGRDPVIDLEKLQQYPPGYRHLAYLQESTMGVKVLLDLPGHRREGSTVNGQKHDLFQEYPMLHGCNSYKDNRGFPTTLKSIALREIRMKYLFDVI.

The disordered stretch occupies residues 1–20 (MPDLHTLPAGSRPERAIRNN).

Belongs to the PEP2 family.

This is an uncharacterized protein from Aspergillus terreus (strain NIH 2624 / FGSC A1156).